The following is a 461-amino-acid chain: CASP-like protein 4U1 (461 aa).

The tract at residues 1-239 (MASTPRTPAP…RAAETKLPLS (239 aa)) is disordered. Residues 1–314 (MASTPRTPAP…AAVAVGERRE (314 aa)) lie on the Cytoplasmic side of the membrane. The segment covering 7–69 (TPAPVRSPPP…PLETPPPPSP (63 aa)) has biased composition (pro residues). Low complexity-rich tracts occupy residues 116–126 (LSPMRLAAPRL) and 135–155 (TPTG…AAAG). Residues 193-204 (SPSPSPTPPSPL) show a composition bias toward pro residues. Residues 205 to 221 (TPAAAPVVNNNSNNKNN) are compositionally biased toward low complexity. Residues 315–335 (LSVTLRLATAVLSLAAFSVIA) traverse the membrane as a helical segment. Residues 336-354 (SARTSGWAGDYYAHHLQYR) lie on the Extracellular side of the membrane. The chain crosses the membrane as a helical span at residues 355 to 375 (YAVAVNVIVCAYSIAQSFGEI). The Cytoplasmic segment spans residues 376–392 (RRLISPRFIFRSMSSYY). Residues 393–413 (CSLFLDQALAYLLMSASSAAA) form a helical membrane-spanning segment. Over 414–431 (SRNDLWVSRFGTDAFNRK) the chain is Extracellular. A helical membrane pass occupies residues 432-452 (ITSALWLSFIAFLMLALNALI). At 453–461 (STANLFSML) the chain is on the cytoplasmic side.

This sequence belongs to the Casparian strip membrane proteins (CASP) family. Homodimer and heterodimers.

The protein resides in the cell membrane. This chain is CASP-like protein 4U1, found in Sorghum bicolor (Sorghum).